The sequence spans 313 residues: 2,3-dihydroxyphenylpropionate/2,3-dihydroxicinnamic acid 1,2-dioxygenase (313 aa).

Histidine 115 functions as the Proton donor in the catalytic mechanism. The active-site Proton acceptor is histidine 179.

It belongs to the LigB/MhpB extradiol dioxygenase family. Homotetramer. Fe(2+) serves as cofactor.

It carries out the reaction 3-(2,3-dihydroxyphenyl)propanoate + O2 = (2Z,4E)-2-hydroxy-6-oxonona-2,4-dienedioate + H(+). The catalysed reaction is (2E)-3-(2,3-dihydroxyphenyl)prop-2-enoate + O2 = (2Z,4E,7E)-2-hydroxy-6-oxonona-2,4,7-trienedioate + H(+). The protein operates within aromatic compound metabolism; 3-phenylpropanoate degradation. Functionally, catalyzes the non-heme iron(II)-dependent oxidative cleavage of 2,3-dihydroxyphenylpropionic acid and 2,3-dihydroxicinnamic acid into 2-hydroxy-6-ketononadienedioate and 2-hydroxy-6-ketononatrienedioate, respectively. The sequence is that of 2,3-dihydroxyphenylpropionate/2,3-dihydroxicinnamic acid 1,2-dioxygenase from Mycolicibacterium smegmatis (strain ATCC 700084 / mc(2)155) (Mycobacterium smegmatis).